We begin with the raw amino-acid sequence, 462 residues long: Glutamate--tRNA ligase 1 (462 aa).

The 'HIGH' region signature appears at 8–18 (PSPTGYLHIGG). Residues 237–241 (KLSKR) carry the 'KMSKS' region motif. Lysine 240 is an ATP binding site.

The protein belongs to the class-I aminoacyl-tRNA synthetase family. Glutamate--tRNA ligase type 1 subfamily. As to quaternary structure, monomer.

It is found in the cytoplasm. The enzyme catalyses tRNA(Glu) + L-glutamate + ATP = L-glutamyl-tRNA(Glu) + AMP + diphosphate. Its function is as follows. Catalyzes the attachment of glutamate to tRNA(Glu) in a two-step reaction: glutamate is first activated by ATP to form Glu-AMP and then transferred to the acceptor end of tRNA(Glu). The protein is Glutamate--tRNA ligase 1 of Campylobacter hominis (strain ATCC BAA-381 / DSM 21671 / CCUG 45161 / LMG 19568 / NCTC 13146 / CH001A).